The sequence spans 551 residues: Cytochrome c lysine N-methyltransferase 1 (551 aa).

One can recognise an SET domain in the interval 46-273 (DKIELLRVSS…PNTEVLITYK (228 aa)). Residues 184–288 (IELLRQIYSA…LAMITKYGFD (105 aa)) are SET-like.

It belongs to the class V-like SAM-binding methyltransferase superfamily.

It is found in the cytoplasm. The protein localises to the cytosol. The enzyme catalyses L-lysyl-[cytochrome c] + S-adenosyl-L-methionine = N(6)-methyl-L-lysyl-[cytochrome c] + S-adenosyl-L-homocysteine + H(+). In terms of biological role, methyltransferase which mediates trimethylation of cytochrome c (CYC1). The polypeptide is Cytochrome c lysine N-methyltransferase 1 (CTM1) (Candida glabrata (strain ATCC 2001 / BCRC 20586 / JCM 3761 / NBRC 0622 / NRRL Y-65 / CBS 138) (Yeast)).